The primary structure comprises 446 residues: Tetratricopeptide repeat protein 23 (446 aa).

TPR repeat units follow at residues Leu-45–Cys-78, Leu-137–Met-170, Ser-186–Thr-219, and Ala-356–Leu-389.

Associated with the EvC complex composed of EFCAB7, IQCE, EVC2 and EVC.

Its subcellular location is the cell projection. It is found in the cilium. Participates positively in the ciliary Hedgehog (Hh) signaling. The polypeptide is Tetratricopeptide repeat protein 23 (Ttc23) (Rattus norvegicus (Rat)).